The primary structure comprises 159 residues: Small ribosomal subunit protein uS15 (159 aa).

Basic residues predominate over residues 1-16; sequence MNKRKEKGKSHSKRPV. Residues 1–22 are disordered; that stretch reads MNKRKEKGKSHSKRPVRNTPPR.

The protein belongs to the universal ribosomal protein uS15 family. As to quaternary structure, part of the 30S ribosomal subunit.

This Ignicoccus hospitalis (strain KIN4/I / DSM 18386 / JCM 14125) protein is Small ribosomal subunit protein uS15.